Consider the following 61-residue polypeptide: MAKKSMVAKWKRGSKYKVRKYNRCHICGRPRAVYREFGLCRVCFRKLASEGKLPGVKKASW.

Positions 24, 27, 40, and 43 each coordinate Zn(2+).

This sequence belongs to the universal ribosomal protein uS14 family. Zinc-binding uS14 subfamily. In terms of assembly, part of the 30S ribosomal subunit. Contacts proteins S3 and S10. Zn(2+) is required as a cofactor.

Functionally, binds 16S rRNA, required for the assembly of 30S particles and may also be responsible for determining the conformation of the 16S rRNA at the A site. The chain is Small ribosomal subunit protein uS14 from Kosmotoga olearia (strain ATCC BAA-1733 / DSM 21960 / TBF 19.5.1).